We begin with the raw amino-acid sequence, 274 residues long: Large ribosomal subunit protein uL2 (274 aa).

The segment at 224-256 is disordered; it reads AMNPIDHPHGGGEGRTGEGRHAVDPWGNLTKGY. The span at 229–246 shows a compositional bias: basic and acidic residues; that stretch reads DHPHGGGEGRTGEGRHAV.

Belongs to the universal ribosomal protein uL2 family. As to quaternary structure, part of the 50S ribosomal subunit. Forms a bridge to the 30S subunit in the 70S ribosome.

Functionally, one of the primary rRNA binding proteins. Required for association of the 30S and 50S subunits to form the 70S ribosome, for tRNA binding and peptide bond formation. It has been suggested to have peptidyltransferase activity; this is somewhat controversial. Makes several contacts with the 16S rRNA in the 70S ribosome. The polypeptide is Large ribosomal subunit protein uL2 (Acidovorax sp. (strain JS42)).